Here is a 329-residue protein sequence, read N- to C-terminus: Probable aryl-alcohol dehydrogenase AAD4 (329 aa).

Residue tyrosine 30 is the Proton donor of the active site. Histidine 105 contributes to the substrate binding site. 190–200 (DVMGGGRFQSK) provides a ligand contact to NADP(+).

The protein belongs to the aldo/keto reductase family. Aldo/keto reductase 2 subfamily.

The chain is Probable aryl-alcohol dehydrogenase AAD4 (AAD4) from Saccharomyces cerevisiae (strain ATCC 204508 / S288c) (Baker's yeast).